Consider the following 312-residue polypeptide: Aquaporin Lacbi1:391485 (312 aa).

Residues Met1 to Glu50 lie on the Cytoplasmic side of the membrane. Residues Phe51 to Ser71 traverse the membrane as a helical segment. The Extracellular portion of the chain corresponds to Ala72–Cys89. A helical membrane pass occupies residues Gly90–Ile110. Positions Asn111 to Ala113 match the NPA 1 motif. Residues Asn111–Lys128 are Cytoplasmic-facing. A helical transmembrane segment spans residues Val129–Val149. Topologically, residues Asn150–Asn183 are extracellular. Asn183 is a glycosylation site (N-linked (GlcNAc...) asparagine). Residues Val184 to Met204 traverse the membrane as a helical segment. Residues Asn205–Pro213 are Cytoplasmic-facing. The chain crosses the membrane as a helical span at residues Ala214–Met234. Residues Glu235–Gln267 are Extracellular-facing. Positions Asn241–Ala243 match the NPA 2 motif. The chain crosses the membrane as a helical span at residues Tyr268–Tyr288. Topologically, residues Asp289–Ala312 are cytoplasmic.

Belongs to the MIP/aquaporin (TC 1.A.8) family.

It is found in the membrane. The catalysed reaction is H2O(in) = H2O(out). The enzyme catalyses glycerol(in) = glycerol(out). It catalyses the reaction NH4(+)(in) = NH4(+)(out). Its function is as follows. Water channel required to facilitate the transport of water across membranes. In addition to water, also shows strong glycerol and ammonium transport activities. May be involved in fungal nitrogen (ammonium) support of the plant host in symbiosis. Glycerol accumulation has never been observed in ectomycorrhizal (ECM) fungi, therefore, glycerol permeability of Lacbi1:391485 might be a relict of the affiliation of the protein to the group of aquaglyceroporins, and other osmotic active compounds (e.g. trehalose or mannitol) may have taken over glycerol function in ECM fungi. The protein is Aquaporin Lacbi1:391485 of Laccaria bicolor (strain S238N-H82 / ATCC MYA-4686) (Bicoloured deceiver).